Reading from the N-terminus, the 328-residue chain is Sterol demethylase protein B (328 aa).

Belongs to the NAD(P)-dependent epimerase/dehydratase family.

It catalyses the reaction a 3beta-hydroxy-4alpha-methylsteroid-4beta-carboxylate + NAD(+) = a 4alpha-methyl-3-oxosteroid + CO2 + NADH. The enzyme catalyses a 3beta-hydroxy-4alpha-methylsteroid-4beta-carboxylate + NADP(+) = a 4alpha-methyl-3-oxosteroid + CO2 + NADPH. The catalysed reaction is 4beta-carboxy-4alpha-methyl-5alpha-cholesta-8,24-dien-3beta-ol + NAD(+) = 3-dehydro-4alpha-methylzymosterol + CO2 + NADH. It carries out the reaction 4beta-carboxy-4alpha-methyl-5alpha-cholesta-8,24-dien-3beta-ol + NADP(+) = 3-dehydro-4alpha-methylzymosterol + CO2 + NADPH. It catalyses the reaction 3-dehydro-4alpha-methylzymosterol + NADPH + H(+) = 4alpha-methylzymosterol + NADP(+). It participates in steroid biosynthesis; sterol biosynthesis. Functionally, participates in the biosynthesis of bacterial sterols. Together with SdmA, removes one methyl group from the C-4 position of 4,4-dimethylated steroid molecules. SdmB catalyzes an oxidative decarboxylation that results in reduction of the 3beta-hydroxy group at the C-3 carbon to an oxo group. It also functions as a ketoreductase that converts the C-3 oxo group back to a hydroxyl group after C-4 demethylation. The sequence is that of Sterol demethylase protein B from Methylococcus capsulatus (strain ATCC 33009 / NCIMB 11132 / Bath).